We begin with the raw amino-acid sequence, 349 residues long: Thioredoxin-related transmembrane protein 4 (349 aa).

Positions 1–23 are cleaved as a signal peptide; the sequence is MAGGRCGPQLTALLAAWIAAVAA. In terms of domain architecture, Thioredoxin spans 30–137; it reads AALPPEQSRV…FEDLQNYILE (108 aa). Catalysis depends on nucleophile residues cysteine 64 and cysteine 67. Cysteine 64 and cysteine 67 are disulfide-bonded. A helical membrane pass occupies residues 190 to 210; sequence VFFVIATLVFGLFMGLVLVVI. The span at 225-240 shows a compositional bias: basic and acidic residues; the sequence is RSEQNRRSEEAHRAEQ. Residues 225–349 form a disordered region; that stretch reads RSEQNRRSEE…RKSQHADKGL (125 aa). Composition is skewed to acidic residues over residues 242-284 and 312-321; these read QDAE…EEDN and VEPEEAEEGI. Phosphoserine is present on residues serine 251 and serine 259. Positions 335-349 are enriched in basic and acidic residues; the sequence is DSLRQRKSQHADKGL.

The protein resides in the nucleus inner membrane. It is found in the endoplasmic reticulum membrane. The polypeptide is Thioredoxin-related transmembrane protein 4 (TMX4) (Homo sapiens (Human)).